A 227-amino-acid polypeptide reads, in one-letter code: Phosphoribosylformylglycinamidine synthase subunit PurQ (227 aa).

The region spanning Lys-2–Asn-226 is the Glutamine amidotransferase type-1 domain. The active-site Nucleophile is Cys-86. Residues His-195 and Glu-197 contribute to the active site.

In terms of assembly, part of the FGAM synthase complex composed of 1 PurL, 1 PurQ and 2 PurS subunits.

The protein localises to the cytoplasm. It carries out the reaction N(2)-formyl-N(1)-(5-phospho-beta-D-ribosyl)glycinamide + L-glutamine + ATP + H2O = 2-formamido-N(1)-(5-O-phospho-beta-D-ribosyl)acetamidine + L-glutamate + ADP + phosphate + H(+). It catalyses the reaction L-glutamine + H2O = L-glutamate + NH4(+). The protein operates within purine metabolism; IMP biosynthesis via de novo pathway; 5-amino-1-(5-phospho-D-ribosyl)imidazole from N(2)-formyl-N(1)-(5-phospho-D-ribosyl)glycinamide: step 1/2. In terms of biological role, part of the phosphoribosylformylglycinamidine synthase complex involved in the purines biosynthetic pathway. Catalyzes the ATP-dependent conversion of formylglycinamide ribonucleotide (FGAR) and glutamine to yield formylglycinamidine ribonucleotide (FGAM) and glutamate. The FGAM synthase complex is composed of three subunits. PurQ produces an ammonia molecule by converting glutamine to glutamate. PurL transfers the ammonia molecule to FGAR to form FGAM in an ATP-dependent manner. PurS interacts with PurQ and PurL and is thought to assist in the transfer of the ammonia molecule from PurQ to PurL. The protein is Phosphoribosylformylglycinamidine synthase subunit PurQ of Listeria monocytogenes serotype 4a (strain HCC23).